The sequence spans 948 residues: P cell-type agglutination protein map4 (948 aa).

A signal peptide spans 1 to 23; that stretch reads MNSYAILLSLFFSFERLLTLANA. Asn-31, Asn-32, and Asn-57 each carry an N-linked (GlcNAc...) asparagine glycan. Disordered regions lie at residues 136-174 and 253-333; these read IPRG…IGTG and FYET…PTTY. A compositionally biased stretch (low complexity) spans 149–174; that stretch reads PTYSASDSSATTITSSSPSTSIIGTG. Residues 253 to 264 show a composition bias toward polar residues; the sequence is FYETKSSTSSVP. Low complexity predominate over residues 265-332; the sequence is TQTIDSSSFT…PSLSSALPTT (68 aa). Asn-383 is a glycosylation site (N-linked (GlcNAc...) asparagine). The tract at residues 408-432 is disordered; that stretch reads LTSSTKKIPSTTLPTSSKMITTTTP. N-linked (GlcNAc...) asparagine glycans are attached at residues Asn-436, Asn-469, Asn-491, Asn-522, Asn-553, Asn-568, and Asn-598. 5 tandem repeats follow at residues 617–652, 653–688, 689–724, 725–760, and 761–796. The interval 617–796 is 5 X 36 AA approximate tandem repeats; the sequence is SYVTETTTSG…GTVLIDVPTP (180 aa). The 153-residue stretch at 796–948 folds into the DIPSY domain; it reads PTASSSPFPS…ANVVLRALEY (153 aa). The N-linked (GlcNAc...) asparagine glycan is linked to Asn-921.

It belongs to the mam3/map4 family.

The protein resides in the cell surface. Functionally, p cell-type specific protein which involved in agglutination during conjugation. This Schizosaccharomyces pombe (strain 972 / ATCC 24843) (Fission yeast) protein is P cell-type agglutination protein map4.